Reading from the N-terminus, the 142-residue chain is MGLMKKFRDYFLEEDYEDYEEEYEAPQPEEEALPKTAGKANVVSLQSVQKSAKVVLAEPRVYAEAQEIADHLKSRRAVIVNLQRIQHEQAKRIVDFLSGTVYAIGGDIQQVGTKIFLCTPENVDVSGSISLDGEDDRPMKRW.

The protein belongs to the SepF family. As to quaternary structure, homodimer. Interacts with FtsZ.

It is found in the cytoplasm. Its function is as follows. Cell division protein that is part of the divisome complex and is recruited early to the Z-ring. Probably stimulates Z-ring formation, perhaps through the cross-linking of FtsZ protofilaments. Its function overlaps with FtsA. The protein is Cell division protein SepF of Geobacillus kaustophilus (strain HTA426).